Reading from the N-terminus, the 288-residue chain is uncharacterized protein (288 aa).

NAD(+)-binding positions include 6-20 (GFIG…MASH) and T97. Residue K172 is part of the active site. K240 serves as a coordination point for NAD(+).

This sequence belongs to the HIBADH-related family.

It localises to the cell membrane. The protein localises to the membrane raft. This is an uncharacterized protein from Bacillus subtilis (strain 168).